The following is an 82-amino-acid chain: Cytochrome b559 subunit alpha (82 aa).

Residues 21 to 35 (VIHSVTIPSLFIAGW) traverse the membrane as a helical segment. His23 contributes to the heme binding site.

It belongs to the PsbE/PsbF family. In terms of assembly, heterodimer of an alpha subunit and a beta subunit. PSII is composed of 1 copy each of membrane proteins PsbA, PsbB, PsbC, PsbD, PsbE, PsbF, PsbH, PsbI, PsbJ, PsbK, PsbL, PsbM, PsbT, PsbX, PsbY, PsbZ, Psb30/Ycf12, at least 3 peripheral proteins of the oxygen-evolving complex and a large number of cofactors. It forms dimeric complexes. Requires heme b as cofactor.

It is found in the plastid. The protein localises to the chloroplast thylakoid membrane. Its function is as follows. This b-type cytochrome is tightly associated with the reaction center of photosystem II (PSII). PSII is a light-driven water:plastoquinone oxidoreductase that uses light energy to abstract electrons from H(2)O, generating O(2) and a proton gradient subsequently used for ATP formation. It consists of a core antenna complex that captures photons, and an electron transfer chain that converts photonic excitation into a charge separation. The chain is Cytochrome b559 subunit alpha from Ostreococcus tauri.